The sequence spans 273 residues: Formamidopyrimidine-DNA glycosylase (273 aa).

P2 serves as the catalytic Schiff-base intermediate with DNA. Catalysis depends on E3, which acts as the Proton donor. K57 functions as the Proton donor; for beta-elimination activity in the catalytic mechanism. Residues H91, R110, and K151 each contribute to the DNA site. Residues 236–270 (QVYGRKGEACNDCGTIIEAKVIGQRNSYFCPHCQI) form an FPG-type zinc finger. R260 (proton donor; for delta-elimination activity) is an active-site residue.

It belongs to the FPG family. As to quaternary structure, monomer. Zn(2+) serves as cofactor.

The enzyme catalyses Hydrolysis of DNA containing ring-opened 7-methylguanine residues, releasing 2,6-diamino-4-hydroxy-5-(N-methyl)formamidopyrimidine.. The catalysed reaction is 2'-deoxyribonucleotide-(2'-deoxyribose 5'-phosphate)-2'-deoxyribonucleotide-DNA = a 3'-end 2'-deoxyribonucleotide-(2,3-dehydro-2,3-deoxyribose 5'-phosphate)-DNA + a 5'-end 5'-phospho-2'-deoxyribonucleoside-DNA + H(+). Involved in base excision repair of DNA damaged by oxidation or by mutagenic agents. Acts as a DNA glycosylase that recognizes and removes damaged bases. Has a preference for oxidized purines, such as 7,8-dihydro-8-oxoguanine (8-oxoG). Has AP (apurinic/apyrimidinic) lyase activity and introduces nicks in the DNA strand. Cleaves the DNA backbone by beta-delta elimination to generate a single-strand break at the site of the removed base with both 3'- and 5'-phosphates. The sequence is that of Formamidopyrimidine-DNA glycosylase from Actinobacillus pleuropneumoniae serotype 7 (strain AP76).